We begin with the raw amino-acid sequence, 314 residues long: Cytosolic sulfotransferase 3 (314 aa).

A 3'-phosphoadenylyl sulfate-binding site is contributed by 71–76 (KSGTLW). The active-site Proton acceptor is the H121. 3'-phosphoadenylyl sulfate is bound by residues R143, S151, Y209, and 275–277 (RKG).

Belongs to the sulfotransferase 1 family.

It localises to the cytoplasm. Its function is as follows. Sulfotransferase that utilizes 3'-phospho-5'-adenylyl sulfate (PAPS) as sulfonate donor. This is Cytosolic sulfotransferase 3 (SOT3) from Arabidopsis thaliana (Mouse-ear cress).